Reading from the N-terminus, the 934-residue chain is MITGLLKKIFGSRNERLIKQYRRKVAQINALEPKFEALSDAELQAKTEEFRQRFAKGETLDALLPEAFAVCREASKRVMKMRHFDVQLIGGMVLHDGKIAEMRTGEGKTLTATLAVYLNAISGQGVHVVTVNDYLAQRDAEWMGRLYNWLGLSVGVNLTTMDHDQKQAAYASDITYGTNNEFGFDYLRDNMVYDAGQRVQRPLNYAIVDEVDSILIDEARTPLIISGQAEDHTDLYRRMNGIPAQLTRQIGEEKSDGTGVEKPGDYYVDEKSHQVYLTESGHEKAEQILLQAGLIGEGESLYAPQNITLMHHLYAALRAHSLFFRDQHYVVQNGEVVIVDEFTGRLMSGRRWSDGLHQAVEAKEGVQIQQENQTLATITFQNYFRMYNKLSGMTGTADTEAYEFQEIYGLETVVIPTNRPPQRKDLQDQIYKTSKERYDAVIRDIRDCYERGQPVLVGTTSIENSELLSNLLNQAKLPHQVLNAKQHEREAEIIAQAGRPKMITIATNMAGRGTDIVLGGNVEKQSGFVMADESLSDAEKASRVKTLQDEWQSLHEQVKAAGGLHIVGTERHESRRIDNQLRGRAGRQGDPGSSRFYLSLDDQLLRIFAGDRVRAIMDRLKMPEGEPIEAGIVTRSIESAQRKVEGRNFDIRKQLLQYDDVSNDQRKELYKLRNEILEAQDVGDLVKNLRESVFTELFRTYVPAETMEEQWDVAGLEKTLREDWGVDQPLVKTLEAAQSIEDEDLLKIVLDAAEAVYEGKVAQVGRESFAGFERSVMLQSLDTHWREHLAALDMLRQGIHLRGYAQKDPKQEYKRESFELFGRLLDTIRNEVTRIVFTVRIQSQEELEQASEQIEEDLSALTNLQYKHDEFSELAEVAAGDAEIHGATPAMAASRSAASAAAAALAGEVPKVGRNDPCPCGSGKKYKQCHGKLV.

ATP is bound by residues glutamine 87, glycine 105–threonine 109, and aspartate 515. 4 residues coordinate Zn(2+): cysteine 918, cysteine 920, cysteine 929, and histidine 930.

This sequence belongs to the SecA family. As to quaternary structure, monomer and homodimer. Part of the essential Sec protein translocation apparatus which comprises SecA, SecYEG and auxiliary proteins SecDF-YajC and YidC. Requires Zn(2+) as cofactor.

The protein localises to the cell inner membrane. It is found in the cytoplasm. It catalyses the reaction ATP + H2O + cellular proteinSide 1 = ADP + phosphate + cellular proteinSide 2.. Its function is as follows. Part of the Sec protein translocase complex. Interacts with the SecYEG preprotein conducting channel. Has a central role in coupling the hydrolysis of ATP to the transfer of proteins into and across the cell membrane, serving both as a receptor for the preprotein-SecB complex and as an ATP-driven molecular motor driving the stepwise translocation of polypeptide chains across the membrane. The polypeptide is Protein translocase subunit SecA (Ralstonia pickettii (strain 12J)).